Consider the following 467-residue polypeptide: Mothers against decapentaplegic homolog 2 (467 aa).

The residue at position 2 (Ser2) is an N-acetylserine. Thr8 bears the Phosphothreonine mark. The 167-residue stretch at 10 to 176 (PVVKRLLGWK…YQRVETPVLP (167 aa)) folds into the MH1 domain. An N6-acetyllysine modification is found at Lys19. 4 residues coordinate Zn(2+): Cys74, Cys149, Cys161, and His166. The segment covering 207 to 217 (PAGIEPQSNYI) has biased composition (polar residues). Residues 207 to 251 (PAGIEPQSNYIPETPPPGYISEDGETSDQQLNQSMDTGSPAELSP) form a disordered region. Residue Thr220 is modified to Phosphothreonine. A PY-motif motif is present at residues 221-225 (PPPGY). The span at 233–243 (SDQQLNQSMDT) shows a compositional bias: polar residues. Ser240 is modified (phosphoserine; by CAMK2). Phosphoserine occurs at positions 245, 250, 255, 458, 460, and 464. The MH2 domain maps to 274-467 (WCSIAYYELN…SPSVRCSSMS (194 aa)). Residues Ser465 and Ser467 each carry the phosphoserine; by TGFBR1 modification.

Belongs to the dwarfin/SMAD family. In terms of assembly, monomer; in the absence of TGF-beta. Heterodimer; in the presence of TGF-beta. Forms a heterodimer with co-SMAD, SMAD4, in the nucleus to form the transactivation complex SMAD2/SMAD4. Found in a complex with SMAD3 and TRIM33 upon addition of TGF-beta. Identified in a complex that contains at least ZNF451, SMAD2, SMAD3 and SMAD4. Interacts (via the MH2 domain) with ZFYVE9; may form trimers with the SMAD4 co-SMAD. Interacts with TAZ/WWRT1. Interacts with FOXH1. Interacts with SNW1. Interacts with CREB-binding protein (CBP) and EP300. Interacts with SNON. Interacts with ALK4/ACVR1B. Interacts with SKOR1. Interacts with SKOR2. Interacts with PRDM16. Interacts (via MH2 domain) with LEMD3. Interacts with RBPMS. Interacts with WWP1. Interacts (dephosphorylated form, via the MH1 and MH2 domains) with RANBP3 (via its C-terminal R domain); the interaction results in the export of dephosphorylated SMAD3 out of the nucleus and termination of the TGF-beta signaling. Interacts with PDPK1 (via PH domain). Interacts with DAB2; the interactions are enhanced upon TGF-beta stimulation. Interacts with USP15. Interacts with PPP5C. Interacts with LDLRAD4 (via the SMAD interaction motif). Interacts (via MH2 domain) with PMEPA1 (via the SMAD interaction motif). Interacts with ZFHX3. Interacts with ZNF451. Interacts with SMURF2 when phosphorylated on Ser-465/467. Interacts with PPM1A. Interacts with TGF-beta. Interacts with TGFBR1. Interacts with TGIF. Interacts with SMAD3 and TRIM33. Interacts with ZNF580. Interacts with NEDD4L in response to TGF-beta. Interacts with HGS. Interacts with AIP1. Interacts with WWP1. Interacts with PML. Interacts weakly with ZNF8. Interacts (when phosphorylated) with RNF111; RNF111 acts as an enhancer of the transcriptional responses by mediating ubiquitination and degradation of SMAD2 inhibitors. Interacts with YAP1 (when phosphorylated at 'Ser-55'). Interacts when phosphorylated with IPO7; the interaction facilitates translocation of SMAD2 to the nucleus. Interacts with MTMR4; negatively regulates TGF-beta signaling through SMAD2 dephosphorylation and retention in endosomes. In terms of processing, in response to TGF-beta, phosphorylated on the C-terminal SXS motif by TGF-beta and activin type 1 receptor kinases, phosphorylation declines progressively in a KMT5A-dependent manner. Phosphorylation in this motif is required for interaction with a number of proteins including SMURF2, SNON and SMAD4 in response to TGF-beta. Dephosphorylated in this motif by PPM1A leading to disruption of the SMAD2/3-SMAD4 complex, nuclear export and termination of the TGF-beta signaling. In response to decorin, the naturally occurring inhibitor of TGF-beta signaling, phosphorylated on Ser-240 by CaMK2. Phosphorylated by MAPK3 upon EGF stimulation; which increases transcriptional activity and stability, and is blocked by calmodulin. Phosphorylated by PDPK1. Post-translationally, acetylated on Lys-19 by coactivators in response to TGF-beta signaling, which increases transcriptional activity. In response to TGF-beta, ubiquitinated by NEDD4L; which promotes its degradation. Monoubiquitinated, leading to prevent DNA-binding. Deubiquitination by USP15 alleviates inhibition and promotes activation of TGF-beta target genes. Ubiquitinated by RNF111, leading to its degradation: only SMAD2 proteins that are 'in use' are targeted by RNF111, RNF111 playing a key role in activating SMAD2 and regulating its turnover.

The protein resides in the cytoplasm. It localises to the nucleus. Functionally, receptor-regulated SMAD (R-SMAD) that is an intracellular signal transducer and transcriptional modulator activated by TGF-beta (transforming growth factor) and activin type 1 receptor kinases. Binds the TRE element in the promoter region of many genes that are regulated by TGF-beta and, on formation of the SMAD2/SMAD4 complex, activates transcription. Promotes TGFB1-mediated transcription of odontoblastic differentiation genes in dental papilla cells. Positively regulates PDPK1 kinase activity by stimulating its dissociation from the 14-3-3 protein YWHAQ which acts as a negative regulator. The protein is Mothers against decapentaplegic homolog 2 (SMAD2) of Bos taurus (Bovine).